Consider the following 507-residue polypeptide: Transposase for insertion sequences IS1326/IS1353 (507 aa).

The 63-residue stretch at 6–68 (ILSAIRRWHF…PFEPKLRQWL (63 aa)) folds into the HTH IS21-type domain. The segment at residues 19 to 40 (ASIREIARRSGLSRNTVRKYLQ) is a DNA-binding region (H-T-H motif). Positions 122 to 302 (GCFIPLRFAC…TVQEAFADEQ (181 aa)) constitute an Integrase catalytic domain.

The protein belongs to the transposase IS21/IS408/IS1162 family.

Required for the transposition of the insertion element. The protein is Transposase for insertion sequences IS1326/IS1353 (istA) of Pseudomonas aeruginosa.